Reading from the N-terminus, the 875-residue chain is MTLARFVLALVLGALPEVVGFDSVLNDSFHHRHRHSPPPGPQYPYYLPTHQRPPRTRPPPPLPRFPRPPRALPAQRPHALQAGHTPRPHPWGCPAGELWVSVTDFGAPCLRWAEVPPFLERSPPANWAQLRGQRHNFCRSPDGTGRPWCFYGDARGKVDWGYCDCRHGSVRLRGGKNEFEGTVEVYASGAWGTVCSSHWDDSDASVICHQLQLGGKGIAKQTPFSGLGLIPIYWSNVRCRGDEENILLCEKDIWQGGVCPQKMAAAVTCSFSRGPAFPIIRLVGGSSVHEGRVELYHAGQWGTICDDQWDDADAEVICRQLGLSGIAKAWHQAYFGEGSGPVMLDEVRCTGNELSIEQCPKSSWGEHNCGHKEDAGVSCTPLTDGVIRLAGGKGSHEGRLEVYYRGQWGTVCDDGWTELNTYVVCRQLGFKYGKQASANHFEESTGPIWLDDVSCSGKETRFLQCSRRQWGQHDCSHHEDVSIACYPGSEGHRLSLGFPVRLMDGENKKEGRVEVFINGQWGTICDDGWTDKDAAVICRQLGYKGPARARTMAYFGEGKGPIHVDNVKCTGNERSLADCIKQDIGRHNCRHSEDAGVICDYFGKKASGNSNKESLSSVCGLRLLHRRQKRIIGGKNSLRGGWPWQVSLRLKSSHGDGRLLCGATLLSSCWVLTAAHCFKRYGNSTRNYAVRVGDYHTLVPEEFEEEIGVQQIVIHREYRPDSSDYDIALVRLQGPEEQCARFSSHVLPACLPFWRERPQKTASNCYITGWGDTGRAYSRTLQQAAIPLLPKRFCEERYKGRFTGRMLCAGNLHEHKRVDSCQGDSGGPLMCERPGESWAVYGVTSWGYGCGVKDSPGVYTKVSAFVPWIKSVTKL.

Residues 1–20 (MTLARFVLALVLGALPEVVG) form the signal peptide. A glycan (N-linked (GlcNAc...) asparagine) is linked at asparagine 26. The disordered stretch occupies residues 30 to 87 (HHRHRHSPPPGPQYPYYLPTHQRPPRTRPPPPLPRFPRPPRALPAQRPHALQAGHTPR). Pro residues predominate over residues 56–71 (TRPPPPLPRFPRPPRA). In terms of domain architecture, Kringle spans 93 to 165 (CPAGELWVSV…GKVDWGYCDC (73 aa)). Cystine bridges form between cysteine 93–cysteine 165, cysteine 109–cysteine 149, cysteine 138–cysteine 163, cysteine 195–cysteine 259, cysteine 208–cysteine 269, cysteine 239–cysteine 249, cysteine 305–cysteine 369, cysteine 318–cysteine 379, cysteine 349–cysteine 359, cysteine 412–cysteine 475, cysteine 425–cysteine 485, cysteine 455–cysteine 465, cysteine 525–cysteine 589, cysteine 538–cysteine 599, cysteine 569–cysteine 579, cysteine 619–cysteine 750, cysteine 661–cysteine 677, cysteine 765–cysteine 831, cysteine 794–cysteine 808, and cysteine 821–cysteine 850. 4 consecutive SRCR domains span residues 170–271 (VRLR…TCSF), 280–381 (IRLV…SCTP), 387–487 (IRLA…ACYP), and 500–601 (VRLM…ICDY). A zymogen activation region region spans residues 619–630 (CGLRLLHRRQKR). Positions 631–874 (IIGGKNSLRG…FVPWIKSVTK (244 aa)) constitute a Peptidase S1 domain. The Charge relay system role is filled by histidine 676. Asparagine 683 is a glycosylation site (N-linked (GlcNAc...) asparagine). Residue aspartate 726 is the Charge relay system of the active site. The active-site Charge relay system is serine 825.

It belongs to the peptidase S1 family.

Its subcellular location is the secreted. Plays a role in neuronal plasticity and the proteolytic action may subserve structural reorganizations associated with learning and memory operations. This Macaca mulatta (Rhesus macaque) protein is Neurotrypsin (PRSS12).